Reading from the N-terminus, the 180-residue chain is Acireductone dioxygenase (180 aa).

Fe(2+)-binding residues include histidine 97, histidine 99, glutamate 103, and histidine 141. Ni(2+)-binding residues include histidine 97, histidine 99, glutamate 103, and histidine 141.

It belongs to the acireductone dioxygenase (ARD) family. As to quaternary structure, monomer. Fe(2+) is required as a cofactor. Requires Ni(2+) as cofactor.

It carries out the reaction 1,2-dihydroxy-5-(methylsulfanyl)pent-1-en-3-one + O2 = 3-(methylsulfanyl)propanoate + CO + formate + 2 H(+). The catalysed reaction is 1,2-dihydroxy-5-(methylsulfanyl)pent-1-en-3-one + O2 = 4-methylsulfanyl-2-oxobutanoate + formate + 2 H(+). It functions in the pathway amino-acid biosynthesis; L-methionine biosynthesis via salvage pathway; L-methionine from S-methyl-5-thio-alpha-D-ribose 1-phosphate: step 5/6. Its function is as follows. Catalyzes 2 different reactions between oxygen and the acireductone 1,2-dihydroxy-3-keto-5-methylthiopentene (DHK-MTPene) depending upon the metal bound in the active site. Fe-containing acireductone dioxygenase (Fe-ARD) produces formate and 2-keto-4-methylthiobutyrate (KMTB), the alpha-ketoacid precursor of methionine in the methionine recycle pathway. Ni-containing acireductone dioxygenase (Ni-ARD) produces methylthiopropionate, carbon monoxide and formate, and does not lie on the methionine recycle pathway. The polypeptide is Acireductone dioxygenase (Cronobacter sakazakii (Enterobacter sakazakii)).